We begin with the raw amino-acid sequence, 238 residues long: Small ribosomal subunit protein uS2c (238 aa).

It belongs to the universal ribosomal protein uS2 family.

The protein localises to the plastid. It localises to the chloroplast. This chain is Small ribosomal subunit protein uS2c (rps2), found in Nuphar advena (Common spatterdock).